Reading from the N-terminus, the 668-residue chain is Biosynthetic arginine decarboxylase (668 aa).

Residue Lys-105 is modified to N6-(pyridoxal phosphate)lysine. 286 to 296 (LDVGGGLGVDY) is a substrate binding site.

The protein belongs to the Orn/Lys/Arg decarboxylase class-II family. SpeA subfamily. The cofactor is Mg(2+). Pyridoxal 5'-phosphate is required as a cofactor.

It catalyses the reaction L-arginine + H(+) = agmatine + CO2. Its function is as follows. Catalyzes the biosynthesis of agmatine from arginine. This is Biosynthetic arginine decarboxylase from Rhodopirellula baltica (strain DSM 10527 / NCIMB 13988 / SH1).